Consider the following 619-residue polypeptide: MAEYGKDYEVIVVGAGHAGCEAALASARMGCNTLLLNLHLDAVAQMSCNPAIGGLAKGHLVREIDALGGEMARVIDATGIQFRTLNTKKGPAVRATRAQADRRAYQFHMKQVVENQPALDLKQGSVSRLILQGDKVSGVETTDGLRFFGQTVVLTTGTFMRGLIHVGLQHFPGGRAGEPPSLGLSDHLAELGLRVGRLKTGTPARLDGNTIDYDRLVPQHGDVPPKPFSADTEKITSPQVPCFITATNAHTHDIIRQGLDRSPLYQGVIEGVGPRYCPSIEDKIMRFPDKDSHHVFLEPEGLGTREVYPNGVSTSLPPDVQLAFLRTIPGLEHVEIMRPGYAIEYDFVDPIQLKPSLETKKIRNLFLAGQINGTSGYEEAAAQGLMAGINAVHALRDCPPVVLGRDQAYIGVMIDDLVTCGTSEPYRMFTSRAEYRLLLREDNADQRLTPLGHQVGLVSDERWQRFTRKMDKIVEGRDFLEKRRLSSSDKEAIGRLGLEDLKNGLSLVQILRRPDINIEDLVFCDDRLADIPENVREQLQIEIKYEGYIARQYEMVERFRRSEQIAIPSDMDYSPIEGLSIEVREKLQKVRPQNLGQAARIPGVTPAAVAILSVLLRRN.

FAD is bound by residues glycine 14–glycine 19, valine 126, and serine 181. Glycine 273–phenylalanine 287 is an NAD(+) binding site. An FAD-binding site is contributed by glutamine 370.

The protein belongs to the MnmG family. In terms of assembly, homodimer. Heterotetramer of two MnmE and two MnmG subunits. FAD serves as cofactor.

It localises to the cytoplasm. NAD-binding protein involved in the addition of a carboxymethylaminomethyl (cmnm) group at the wobble position (U34) of certain tRNAs, forming tRNA-cmnm(5)s(2)U34. This chain is tRNA uridine 5-carboxymethylaminomethyl modification enzyme MnmG, found in Syntrophotalea carbinolica (strain DSM 2380 / NBRC 103641 / GraBd1) (Pelobacter carbinolicus).